The chain runs to 449 residues: Wilms tumor protein (449 aa).

Residues 48–84 are disordered; sequence YGSLGGPAPPPAPPPPPPPPPHSFIKQEPSWGGAEPH. Pro residues predominate over residues 54–69; the sequence is PAPPPAPPPPPPPPPH. Residues Lys73 and Lys177 each participate in a glycyl lysine isopeptide (Lys-Gly) (interchain with G-Cter in SUMO) cross-link. The short motif at 236–244 is the 9aaTAD element; that stretch reads MTWNQMNLG. 3 consecutive C2H2-type zinc fingers follow at residues 323 to 347, 353 to 377, and 383 to 405; these read FMCA…SRKH, YQCD…QRRH, and FQCK…TRTH. Important for interaction with target DNA stretches follow at residues 367–381 and 393–401; these read SDQL…TGVK and SRSDHLKTH. The KTS motif signature appears at 408 to 410; sequence KTS. The C2H2-type 4 zinc-finger motif lies at 414-438; that stretch reads FSCRWPSCQKKFARSDELVRHHNMH. Lys444 participates in a covalent cross-link: Glycyl lysine isopeptide (Lys-Gly) (interchain with G-Cter in SUMO2).

Belongs to the EGR C2H2-type zinc-finger protein family. In terms of assembly, homodimer. Interacts with WTIP. Interacts with actively translating polysomes. Detected in nuclear ribonucleoprotein (mRNP) particles. Interacts with HNRNPU via the zinc-finger region. Interacts with U2AF2. Interacts with CITED2. Interacts with ZNF224 via the zinc-finger region. Interacts with WTAP and SRY. Interacts with AMER1. Interacts with RBM4. Expressed in the kidney and a subset of hematopoietic cells.

The protein resides in the nucleus. The protein localises to the nucleolus. It localises to the cytoplasm. Its subcellular location is the nucleus speckle. It is found in the nucleoplasm. In terms of biological role, transcription factor that plays an important role in cellular development and cell survival. Recognizes and binds to the DNA sequence 5'-GCG(T/G)GGGCG-3'. Regulates the expression of numerous target genes, including EPO. Plays an essential role for development of the urogenital system. It has a tumor suppressor as well as an oncogenic role in tumor formation. Function may be isoform-specific: isoforms lacking the KTS motif may act as transcription factors. Isoforms containing the KTS motif may bind mRNA and play a role in mRNA metabolism or splicing. Isoform 1 has lower affinity for DNA, and can bind RNA. This chain is Wilms tumor protein (WT1), found in Homo sapiens (Human).